The sequence spans 455 residues: Bifunctional protein GlmU (455 aa).

The interval 1-226 (MGLSVVILAA…EFEILGVNDR (226 aa)) is pyrophosphorylase. UDP-N-acetyl-alpha-D-glucosamine is bound by residues 8-11 (LAAG), Lys22, Gln73, 78-79 (GT), 99-101 (YGD), Gly136, Glu151, Asn166, and Asn224. Asp101 lines the Mg(2+) pocket. Position 224 (Asn224) interacts with Mg(2+). The tract at residues 227–247 (TQLASLERVWQRNVAEKIMAK) is linker. An N-acetyltransferase region spans residues 248–455 (GVSIADPNRF…WQRPVKKTDK (208 aa)). UDP-N-acetyl-alpha-D-glucosamine-binding residues include Arg330 and Lys348. The active-site Proton acceptor is His360. UDP-N-acetyl-alpha-D-glucosamine contacts are provided by Tyr363 and Asn374. Acetyl-CoA-binding positions include Ala377, 383–384 (NY), Ser402, Ala420, and Arg437.

It in the N-terminal section; belongs to the N-acetylglucosamine-1-phosphate uridyltransferase family. The protein in the C-terminal section; belongs to the transferase hexapeptide repeat family. Homotrimer. Requires Mg(2+) as cofactor.

It is found in the cytoplasm. It catalyses the reaction alpha-D-glucosamine 1-phosphate + acetyl-CoA = N-acetyl-alpha-D-glucosamine 1-phosphate + CoA + H(+). It carries out the reaction N-acetyl-alpha-D-glucosamine 1-phosphate + UTP + H(+) = UDP-N-acetyl-alpha-D-glucosamine + diphosphate. Its pathway is nucleotide-sugar biosynthesis; UDP-N-acetyl-alpha-D-glucosamine biosynthesis; N-acetyl-alpha-D-glucosamine 1-phosphate from alpha-D-glucosamine 6-phosphate (route II): step 2/2. The protein operates within nucleotide-sugar biosynthesis; UDP-N-acetyl-alpha-D-glucosamine biosynthesis; UDP-N-acetyl-alpha-D-glucosamine from N-acetyl-alpha-D-glucosamine 1-phosphate: step 1/1. It participates in bacterial outer membrane biogenesis; LPS lipid A biosynthesis. Its function is as follows. Catalyzes the last two sequential reactions in the de novo biosynthetic pathway for UDP-N-acetylglucosamine (UDP-GlcNAc). The C-terminal domain catalyzes the transfer of acetyl group from acetyl coenzyme A to glucosamine-1-phosphate (GlcN-1-P) to produce N-acetylglucosamine-1-phosphate (GlcNAc-1-P), which is converted into UDP-GlcNAc by the transfer of uridine 5-monophosphate (from uridine 5-triphosphate), a reaction catalyzed by the N-terminal domain. The chain is Bifunctional protein GlmU from Francisella tularensis subsp. novicida (strain U112).